A 1379-amino-acid chain; its full sequence is ABC multidrug transporter MDR2 (1379 aa).

The chain crosses the membrane as a helical span at residues 65–85; it reads IALIVIGTIAGIGAGIPFPLL. The region spanning 69–367 is the ABC transmembrane type-1 1 domain; the sequence is VIGTIAGIGA…MAPFMHIFAS (299 aa). Asparagine 97 carries an N-linked (GlcNAc...) asparagine glycan. The next 5 helical transmembrane spans lie at 119–139, 193–213, 215–235, 301–321, and 336–356; these read VLQV…HTGC, KVGL…VAFL, VATI…MAFG, IQFG…FWQG, and VSVG…FVLS. Residues 403–682 form the ABC transporter 1 domain; it reads IELQDVTFNY…DGVYAGMVRL (280 aa). Residue 438–445 coordinates ATP; it reads GTSGSGKS. Asparagine 552 and asparagine 633 each carry an N-linked (GlcNAc...) asparagine glycan. Residues 738–758 form a disordered region; sequence YMPEEADSLPTEPENEKEKPK. 4 consecutive transmembrane segments (helical) span residues 781 to 801, 820 to 840, 901 to 921, and 922 to 942; these read LGLI…VIFG, GMLF…AVIV, IGVL…SHVI, and AWRI…SGVL. Residues 781-1068 enclose the ABC transmembrane type-1 2 domain; that stretch reads LGLITSIMIG…MFALVPDISK (288 aa). A glycan (N-linked (GlcNAc...) asparagine) is linked at asparagine 989. The next 2 membrane-spanning stretches (helical) occupy residues 1008 to 1028 and 1032 to 1052; these read FWLS…YWWG and ILAG…LLFS. One can recognise an ABC transporter 2 domain in the interval 1135 to 1374; that stretch reads VQFRNVHFRY…CESYRANVIH (240 aa). 1170–1177 lines the ATP pocket; it reads GPSGSGKS.

This sequence belongs to the ABC transporter superfamily. ABCB family. Multidrug resistance exporter (TC 3.A.1.201) subfamily.

Its subcellular location is the cell membrane. Functionally, pleiotropic ABC efflux transporter that may be involved in the modulation susceptibility to a wide range of unrelated cytotoxic compounds. The sequence is that of ABC multidrug transporter MDR2 from Trichophyton equinum (strain ATCC MYA-4606 / CBS 127.97) (Horse ringworm fungus).